Consider the following 647-residue polypeptide: Chaperone protein DnaK (647 aa).

Phosphothreonine; by autocatalysis is present on Thr198. A disordered region spans residues 606 to 634; that stretch reads GASAEGMDPNQFQQGADNAGESNQADDDV. Over residues 615-628 the composition is skewed to polar residues; the sequence is NQFQQGADNAGESN.

It belongs to the heat shock protein 70 family.

Functionally, acts as a chaperone. The protein is Chaperone protein DnaK of Psychrobacter cryohalolentis (strain ATCC BAA-1226 / DSM 17306 / VKM B-2378 / K5).